A 260-amino-acid chain; its full sequence is CD27 antigen (260 aa).

Residues 1–19 (MARPHPWWLCVLGTLVGLS) form the signal peptide. The Extracellular segment spans residues 20–191 (ATPAPKSCPE…RSLCSSDFIR (172 aa)). TNFR-Cys repeat units follow at residues 26-63 (SCPE…AQCD), 64-104 (PCIP…NAEC), and 105-141 (ACRN…PHPQ). 8 cysteine pairs are disulfide-bonded: Cys27–Cys39, Cys40–Cys53, Cys43–Cys62, Cys65–Cys81, Cys84–Cys96, Cys87–Cys104, Cys106–Cys120, and Cys112–Cys117. Asn95 carries N-linked (GlcNAc...) asparagine glycosylation. Residue Ser127 is glycosylated (O-linked (GalNAc...) serine). A helical membrane pass occupies residues 192–212 (ILVIFSGMFLVFTLAGALFLH). Residues 213-260 (QRRKYRSNKGESPVEPAEPCHYSCPREEEGSTIPIQEDYRKPEPACSP) are Cytoplasmic-facing. Ser219 is modified (phosphoserine). Residues 219–260 (SNKGESPVEPAEPCHYSCPREEEGSTIPIQEDYRKPEPACSP) form a disordered region. Residues 249–260 (EDYRKPEPACSP) show a composition bias toward basic and acidic residues.

As to quaternary structure, homodimer. Interacts with SIVA1; may play a role in apoptosis through association with SIVA1. Interacts with TRAF2. Interacts ith PTPN6. Post-translationally, phosphorylated. N-glycosylated. In terms of processing, O-glycosylated with core 1 or possibly core 8 glycans. As to expression, found in most T-lymphocytes.

Its subcellular location is the cell membrane. In terms of biological role, costimulatory immune-checkpoint receptor expressed at the surface of T-cells, NK-cells and B-cells which binds to and is activated by its ligand CD70/CD27L expressed by B-cells. The CD70-CD27 signaling pathway mediates antigen-specific T-cell activation and expansion which in turn provides immune surveillance of B-cells. Mechanistically, CD70 ligation activates the TRAF2-PTPN6 axis that subsequently inhibits LCK phosphorylation to promote phenotypic and transcriptional adaptations of T-cell memory. In addition, activation by CD70 on early progenitor cells provides a negative feedback signal to leukocyte differentiation during immune activation and thus modulates hematopoiesis. Negatively regulates the function of Th2 lymphocytes in the adipose tissue. In Homo sapiens (Human), this protein is CD27 antigen.